The sequence spans 318 residues: Methionyl-tRNA formyltransferase (318 aa).

110–113 is a (6S)-5,6,7,8-tetrahydrofolate binding site; sequence SLLP.

Belongs to the Fmt family.

The enzyme catalyses L-methionyl-tRNA(fMet) + (6R)-10-formyltetrahydrofolate = N-formyl-L-methionyl-tRNA(fMet) + (6S)-5,6,7,8-tetrahydrofolate + H(+). In terms of biological role, attaches a formyl group to the free amino group of methionyl-tRNA(fMet). The formyl group appears to play a dual role in the initiator identity of N-formylmethionyl-tRNA by promoting its recognition by IF2 and preventing the misappropriation of this tRNA by the elongation apparatus. This chain is Methionyl-tRNA formyltransferase, found in Ligilactobacillus salivarius (strain UCC118) (Lactobacillus salivarius).